We begin with the raw amino-acid sequence, 616 residues long: Dihydroxy-acid dehydratase (616 aa).

D81 is a binding site for Mg(2+). Residue C122 participates in [2Fe-2S] cluster binding. Mg(2+)-binding residues include D123 and K124. K124 is subject to N6-carboxylysine. C196 provides a ligand contact to [2Fe-2S] cluster. E496 lines the Mg(2+) pocket. Residue S522 is the Proton acceptor of the active site.

The protein belongs to the IlvD/Edd family. In terms of assembly, homodimer. [2Fe-2S] cluster is required as a cofactor. Requires Mg(2+) as cofactor.

The enzyme catalyses (2R)-2,3-dihydroxy-3-methylbutanoate = 3-methyl-2-oxobutanoate + H2O. The catalysed reaction is (2R,3R)-2,3-dihydroxy-3-methylpentanoate = (S)-3-methyl-2-oxopentanoate + H2O. The protein operates within amino-acid biosynthesis; L-isoleucine biosynthesis; L-isoleucine from 2-oxobutanoate: step 3/4. Its pathway is amino-acid biosynthesis; L-valine biosynthesis; L-valine from pyruvate: step 3/4. Functions in the biosynthesis of branched-chain amino acids. Catalyzes the dehydration of (2R,3R)-2,3-dihydroxy-3-methylpentanoate (2,3-dihydroxy-3-methylvalerate) into 2-oxo-3-methylpentanoate (2-oxo-3-methylvalerate) and of (2R)-2,3-dihydroxy-3-methylbutanoate (2,3-dihydroxyisovalerate) into 2-oxo-3-methylbutanoate (2-oxoisovalerate), the penultimate precursor to L-isoleucine and L-valine, respectively. The sequence is that of Dihydroxy-acid dehydratase from Streptomyces griseus subsp. griseus (strain JCM 4626 / CBS 651.72 / NBRC 13350 / KCC S-0626 / ISP 5235).